A 66-amino-acid polypeptide reads, in one-letter code: Moricin-2 (66 aa).

The signal sequence occupies residues 1-24 (MNILKLFFVFIVAMSLVSCSTAAP).

Expressed in fat body and to a lesser extent in hemocyte and Malpighian tubules.

Its subcellular location is the secreted. In terms of biological role, has antibacterial activity against Gram-positive and Gram-negative bacteria. Probably acts by disturbing membrane functions with its amphipathic structure. This chain is Moricin-2 (MOR2), found in Bombyx mori (Silk moth).